A 608-amino-acid chain; its full sequence is DNA mismatch repair protein MutL (608 aa).

A disordered region spans residues 363-397 (ASLAMARKPDPPRFHETARPQPDPRHTPGTESVSV). Residues 369–390 (RKPDPPRFHETARPQPDPRHTP) show a composition bias toward basic and acidic residues.

The protein belongs to the DNA mismatch repair MutL/HexB family.

Functionally, this protein is involved in the repair of mismatches in DNA. It is required for dam-dependent methyl-directed DNA mismatch repair. May act as a 'molecular matchmaker', a protein that promotes the formation of a stable complex between two or more DNA-binding proteins in an ATP-dependent manner without itself being part of a final effector complex. This chain is DNA mismatch repair protein MutL, found in Pelobacter propionicus (strain DSM 2379 / NBRC 103807 / OttBd1).